We begin with the raw amino-acid sequence, 381 residues long: Subtilisin NAT (381 aa).

Positions 1–29 (MRSKKLWISLLFALTLIFTMAFSNMSAQA) are cleaved as a signal peptide. A propeptide spanning residues 30–106 (AGKSSTEKKY…VEEDHIAHEY (77 aa)) is cleaved from the precursor. The Inhibitor I9 domain maps to 38–103 (KYIVGFKQTM…VAYVEEDHIA (66 aa)). The region spanning 111-380 (PYGISQIKAP…KGLINVQAAA (270 aa)) is the Peptidase S8 domain. Catalysis depends on Asp138, which acts as the Charge relay system. Ca(2+) is bound at residue Asp147. The Charge relay system role is filled by His170. Ca(2+) contacts are provided by Leu181, Asn183, Ile185, Val187, Ala275, Tyr277, Thr280, and Asp303. The Charge relay system role is filled by Ser327.

This sequence belongs to the peptidase S8 family. In terms of assembly, monomer. Requires Ca(2+) as cofactor.

It is found in the secreted. The catalysed reaction is Hydrolysis of proteins with broad specificity for peptide bonds, and a preference for a large uncharged residue in P1. Hydrolyzes peptide amides.. Its activity is regulated as follows. Inhibited by PMSF (phenylmethylsulfonyl fluoride). In terms of biological role, subtilisin is an extracellular alkaline serine protease, it catalyzes the hydrolysis of proteins and peptide amides. Subtilisin NAT also has fibrinolytic activity. This Bacillus subtilis subsp. natto protein is Subtilisin NAT.